We begin with the raw amino-acid sequence, 275 residues long: Large ribosomal subunit protein uL2 (275 aa).

The disordered stretch occupies residues 223–275 (GVVMNPVDHPHGGGEGRGKGHHPQSPWGVPAKGYKTRRGKRASDKFIVRRRNG). Basic and acidic residues predominate over residues 230 to 240 (DHPHGGGEGRG).

Belongs to the universal ribosomal protein uL2 family. Part of the 50S ribosomal subunit. Forms a bridge to the 30S subunit in the 70S ribosome.

Its function is as follows. One of the primary rRNA binding proteins. Required for association of the 30S and 50S subunits to form the 70S ribosome, for tRNA binding and peptide bond formation. It has been suggested to have peptidyltransferase activity; this is somewhat controversial. Makes several contacts with the 16S rRNA in the 70S ribosome. The chain is Large ribosomal subunit protein uL2 from Fervidobacterium nodosum (strain ATCC 35602 / DSM 5306 / Rt17-B1).